Consider the following 142-residue polypeptide: Small ribosomal subunit protein uS12 (142 aa).

The protein belongs to the universal ribosomal protein uS12 family. In terms of assembly, part of the 30S ribosomal subunit.

In terms of biological role, with S4 and S5 plays an important role in translational accuracy. Located at the interface of the 30S and 50S subunits. The protein is Small ribosomal subunit protein uS12 of Methanospirillum hungatei JF-1 (strain ATCC 27890 / DSM 864 / NBRC 100397 / JF-1).